The sequence spans 479 residues: Poly(A) polymerase catalytic subunit (479 aa).

Residues D202 and D204 contribute to the active site. The Ca(2+) site is built by D202, D204, and D253.

Belongs to the poxviridae poly(A) polymerase catalytic subunit family. In terms of assembly, heterodimer of a large (catalytic) subunit and a small (regulatory) subunit.

It carries out the reaction RNA(n) + ATP = RNA(n)-3'-adenine ribonucleotide + diphosphate. Its function is as follows. Polymerase that creates the 3'-poly(A) tail of mRNA's. In Cowpox virus (strain GRI-90 / Grishak) (CPV), this protein is Poly(A) polymerase catalytic subunit (OPG063).